Reading from the N-terminus, the 75-residue chain is Protein SlyX homolog (75 aa).

It belongs to the SlyX family.

The polypeptide is Protein SlyX homolog (Vibrio atlanticus (strain LGP32) (Vibrio splendidus (strain Mel32))).